The primary structure comprises 380 residues: Opsin-2 (380 aa).

Residues 1 to 51 (MVNTTDFYPVPAAMAYESSVGLPLLGWNVPTEHLDLVHPHWRSFQVPNKYW) are Extracellular-facing. Asn3 carries an N-linked (GlcNAc...) asparagine glycan. A helical membrane pass occupies residues 52–76 (HFGLAFVYFMLMCMSSLGNGIVLWI). Residues 77-88 (YATTKSIRTPSN) lie on the Cytoplasmic side of the membrane. The helical transmembrane segment at 89-115 (MFIVNLALFDVLMLLEMPMLVVSSLFY) threads the bilayer. Topologically, residues 116 to 128 (QRPVGWELGCDIY) are extracellular. Cys125 and Cys202 are disulfide-bonded. The chain crosses the membrane as a helical span at residues 129–148 (AALGSVAGIGSAINNAAIAF). The Cytoplasmic portion of the chain corresponds to 149 to 166 (DRYRTISCPIDGRLTQGQ). Residues 167–191 (VLALIAGTWVWTLPFTLMPLLRIWS) form a helical membrane-spanning segment. The Extracellular segment spans residues 192–215 (RFTAEGFLTTCSFDYLTDDEDTKV). Residues 216-243 (FVGCIFAWSYAFPLCLICCFYYRLIGAV) form a helical membrane-spanning segment. The Cytoplasmic portion of the chain corresponds to 244–279 (REHEKMLRDQAKKMNVKSLQSNADTEAQSAEIRIAK). A helical membrane pass occupies residues 280 to 303 (VALTIFFLFLCSWTPYAVVAMIGA). At 304 to 311 (FGNRAALT) the chain is on the extracellular side. A helical membrane pass occupies residues 312–336 (PLSTMIPAVTAKIVSCIDPWVYAIN). Lys323 is subject to N6-(retinylidene)lysine. Residues 337–380 (HPRFRAEVQKRMKWLHLGEDARSSKSDTSSTATDRTVGNVSASA) lie on the Cytoplasmic side of the membrane. Residues 358-380 (RSSKSDTSSTATDRTVGNVSASA) form a disordered region. The span at 362–372 (SDTSSTATDRT) shows a compositional bias: low complexity.

This sequence belongs to the G-protein coupled receptor 1 family. Opsin subfamily. In terms of processing, phosphorylated on some or all of the serine and threonine residues present in the C-terminal region.

It is found in the membrane. Functionally, visual pigments are the light-absorbing molecules that mediate vision. They consist of an apoprotein, opsin, covalently linked to cis-retinal. The protein is Opsin-2 (Lo2) of Schistocerca gregaria (Desert locust).